The chain runs to 668 residues: Spartin (668 aa).

The residue at position 1 (Met-1) is an N-acetylmethionine. The MIT domain occupies 16–94 (IKEAYKKAFV…LQNVRTRLEI (79 aa)). Residues 110-176 (VPKLYPEFPP…PSEAPPAYTP (67 aa)) are disordered. Basic and acidic residues predominate over residues 118–127 (PPKDMSEKSP). Ser-126 carries the post-translational modification Phosphoserine. The segment covering 128-162 (EPQSLSSLPQHSEVNGSTSTASAESSSTPTTLSLP) has biased composition (low complexity). A ubiquitin-binding region (UBR) domain region spans residues 190–380 (ESGEFSSVGE…QLDPSSKDVR (191 aa)). The LC3-interacting region (LIR); mediates interaction with MAP1LC3A AND MAP1LC3C signature appears at 193 to 200 (EFSSVGEN). Residues 348 to 396 (FQIPGISGSASDQLKEASGTDVRQLDPSSKDVRQKGKRGKKTKGTSSEE) are disordered. Residue Lys-362 forms a Glycyl lysine isopeptide (Lys-Gly) (interchain with G-Cter in ubiquitin) linkage. Positions 427-611 (ILSGASWVSW…YNIDNIGIKA (185 aa)) constitute a Senescence domain. The tract at residues 431-503 (ASWVSWGLVK…LVDGVCTVAN (73 aa)) is required for localization to lipid droplets. Residue Ser-470 is modified to Phosphoserine. The tract at residues 631-668 (IDNSKGENPGGGASANLKGEKDEQKEGPEKNGAKKKDK) is disordered. The segment covering 648 to 668 (KGEKDEQKEGPEKNGAKKKDK) has biased composition (basic and acidic residues).

As to quaternary structure, interacts with ITCH and WWP1. Interacts (via MIT domain) with IST1; leading to the recruitment of SPART to midbodies. Interacts with MAP1LC3A and MAP1LC3C. Ubiquitinated; ubiquitination does not require ITCH and WWP1.

It localises to the cytoplasm. The protein localises to the midbody. Its subcellular location is the lipid droplet. In terms of biological role, lipophagy receptor that plays an important role in lipid droplet (LD) turnover in motor neurons. Localizes to LDs and interacts with components of the autophagy machinery, such as MAP1LC3A/C proteins to deliver LDs to autophagosomes for degradation via lipophagy. Lipid transfer protein required for lipid droplet degradation, including by lipophagy. Can bind and transfer all lipid species found in lipid droplets, from phospholipids to triglycerides and sterol esters but the direction of lipid transfer by spartin and its cargos are unknown. May be implicated in endosomal trafficking, or microtubule dynamics, or both. Participates in cytokinesis. This chain is Spartin, found in Bos taurus (Bovine).